The following is a 255-amino-acid chain: Hydroxyacylglutathione hydrolase (255 aa).

Residues H56, H58, D60, H61, H114, D133, and H171 each contribute to the Zn(2+) site.

Belongs to the metallo-beta-lactamase superfamily. Glyoxalase II family. Monomer. Zn(2+) is required as a cofactor.

It catalyses the reaction an S-(2-hydroxyacyl)glutathione + H2O = a 2-hydroxy carboxylate + glutathione + H(+). The protein operates within secondary metabolite metabolism; methylglyoxal degradation; (R)-lactate from methylglyoxal: step 2/2. Its function is as follows. Thiolesterase that catalyzes the hydrolysis of S-D-lactoyl-glutathione to form glutathione and D-lactic acid. In Roseobacter denitrificans (strain ATCC 33942 / OCh 114) (Erythrobacter sp. (strain OCh 114)), this protein is Hydroxyacylglutathione hydrolase.